Consider the following 202-residue polypeptide: Putative transmembrane protein ORF202 (202 aa).

The next 5 helical transmembrane spans lie at 13-33 (AIAFGLAYSILEVNVPLFHYI), 40-60 (VFYLIIFAIANMTLPLSLFLG), 87-107 (YYPVIDGIPIADVIEVIISVF), 156-176 (YGALTLVLVSVLAILSSHSLS), and 177-197 (LTAFATLSLIVGTGIFVDLWA).

The protein resides in the host membrane. The protein is Putative transmembrane protein ORF202 of Acidianus filamentous virus 2 (isolate Italy/Pozzuoli) (AFV-2).